Reading from the N-terminus, the 106-residue chain is ATP-dependent Clp protease adapter protein ClpS (106 aa).

The disordered stretch occupies residues methionine 1–leucine 22.

Belongs to the ClpS family. In terms of assembly, binds to the N-terminal domain of the chaperone ClpA.

Its function is as follows. Involved in the modulation of the specificity of the ClpAP-mediated ATP-dependent protein degradation. This Halorhodospira halophila (strain DSM 244 / SL1) (Ectothiorhodospira halophila (strain DSM 244 / SL1)) protein is ATP-dependent Clp protease adapter protein ClpS.